A 904-amino-acid chain; its full sequence is Structural polyprotein (904 aa).

Disordered stretches follow at residues 1 to 27 (ADQE…VETE), 35 to 54 (VETP…SARS), and 320 to 348 (NNSN…KIGP). A compositionally biased stretch (polar residues) spans 39-53 (NRINTPMAQDTSSAR). Over residues 329–343 (VKEKTKNIPKPKTEN) the composition is skewed to basic and acidic residues.

Belongs to the picornaviruses polyprotein family. Specific enzymatic cleavages in vivo yield mature proteins.

The protein resides in the virion. The protein localises to the host cytoplasm. Its function is as follows. Structural polyprotein: precursor of all the viral capsid proteins. In terms of biological role, forms, together with protein VP2 and protein VP3, an icosahedral capsid protecting the viral RNA genome. The icosahedral capsid has a pseudo-T=3 symmetry with a diameter of approximately 300 Angstroms, and is composed of 60 copies of each capsid proteins. Forms, together with protein VP1 and protein VP3, an icosahedral capsid protecting the viral RNA genome. The icosahedral capsid has a pseudo-T=3 symmetry with a diameter of approximately 300 Angstroms, and is composed of 60 copies of each capsid proteins. Functionally, forms, together with protein VP1 and protein VP2, an icosahedral capsid protecting the viral RNA genome. The icosahedral capsid has a pseudo-T=3 symmetry with a diameter of approximately 300 Angstroms, and is composed of 60 copies of each capsid proteins. This chain is Structural polyprotein, found in Apis mellifera (Honeybee).